Consider the following 61-residue polypeptide: Beta-insect depressant toxin BmKIT2 (61 aa).

The LCN-type CS-alpha/beta domain occupies 1-61; the sequence is DGYIKGKSGC…TWKSESNTCG (61 aa). Intrachain disulfides connect Cys10–Cys60, Cys14–Cys35, Cys21–Cys42, and Cys25–Cys44. Gly61 carries the glycine amide modification.

This sequence belongs to the long (4 C-C) scorpion toxin superfamily. Sodium channel inhibitor family. Beta subfamily. As to expression, expressed by the venom gland.

Its subcellular location is the secreted. On insects, this depressant beta-toxins cause a transient contraction paralysis followed by a slow flaccid paralysis. They bind voltage-independently at site-4 of sodium channels (Nav) and shift the voltage of activation toward more negative potentials thereby affecting sodium channel activation and promoting spontaneous and repetitive firing. This toxin is active against insects and mammals. It is capable of binding to not only cockroach neuronal membranes, but also rat cerebrocortical and hippocampal synaptosomes. This toxin also has potent peripheral and central suppressive effects on rat nociceptive spontaneous responses, thermal hyperalgesia and spinal c-Fos expression induced by formalin and carrageenan, which may be derived from its modulation on the activity of sodium channels of the neurons. Administration of BmKIT2 into rat brain can also suppress the epileptic seizures significantly. The protein is Beta-insect depressant toxin BmKIT2 of Olivierus martensii (Manchurian scorpion).